We begin with the raw amino-acid sequence, 125 residues long: Large ribosomal subunit protein bL12 (125 aa).

It belongs to the bacterial ribosomal protein bL12 family. In terms of assembly, homodimer. Part of the ribosomal stalk of the 50S ribosomal subunit. Forms a multimeric L10(L12)X complex, where L10 forms an elongated spine to which 2 to 4 L12 dimers bind in a sequential fashion. Binds GTP-bound translation factors.

In terms of biological role, forms part of the ribosomal stalk which helps the ribosome interact with GTP-bound translation factors. Is thus essential for accurate translation. This chain is Large ribosomal subunit protein bL12, found in Chlorobium limicola (strain DSM 245 / NBRC 103803 / 6330).